Reading from the N-terminus, the 302-residue chain is 4-diphosphocytidyl-2-C-methyl-D-erythritol kinase (302 aa).

The active site involves lysine 20. ATP is bound at residue 106–116; sequence PVASGVGGGSG. The active site involves aspartate 148.

The protein belongs to the GHMP kinase family. IspE subfamily.

The catalysed reaction is 4-CDP-2-C-methyl-D-erythritol + ATP = 4-CDP-2-C-methyl-D-erythritol 2-phosphate + ADP + H(+). The protein operates within isoprenoid biosynthesis; isopentenyl diphosphate biosynthesis via DXP pathway; isopentenyl diphosphate from 1-deoxy-D-xylulose 5-phosphate: step 3/6. Its function is as follows. Catalyzes the phosphorylation of the position 2 hydroxy group of 4-diphosphocytidyl-2C-methyl-D-erythritol. The polypeptide is 4-diphosphocytidyl-2-C-methyl-D-erythritol kinase (Bartonella henselae (strain ATCC 49882 / DSM 28221 / CCUG 30454 / Houston 1) (Rochalimaea henselae)).